The following is a 193-amino-acid chain: Small ribosomal subunit protein eS1 (193 aa).

The protein belongs to the eukaryotic ribosomal protein eS1 family.

In Sulfurisphaera tokodaii (strain DSM 16993 / JCM 10545 / NBRC 100140 / 7) (Sulfolobus tokodaii), this protein is Small ribosomal subunit protein eS1.